A 406-amino-acid polypeptide reads, in one-letter code: Bifunctional enzyme IspD/IspF (406 aa).

The tract at residues 1–247 is 2-C-methyl-D-erythritol 4-phosphate cytidylyltransferase; sequence MSLIRVNGEA…AFFFNPAKDT (247 aa). A 2-C-methyl-D-erythritol 2,4-cyclodiphosphate synthase region spans residues 248–406; sequence FIGMGFDTHA…HVSMRYKQKL (159 aa). Aspartate 254 and histidine 256 together coordinate a divalent metal cation. Residues 254-256 and 280-281 each bind 4-CDP-2-C-methyl-D-erythritol 2-phosphate; these read DTH and HS. Position 288 (histidine 288) interacts with a divalent metal cation. 4-CDP-2-C-methyl-D-erythritol 2-phosphate is bound by residues 302-304, 307-311, 378-381, phenylalanine 385, and lysine 388; these read DIG, FPDND, and TTME.

This sequence in the N-terminal section; belongs to the IspD/TarI cytidylyltransferase family. IspD subfamily. It in the C-terminal section; belongs to the IspF family. A divalent metal cation serves as cofactor.

The catalysed reaction is 2-C-methyl-D-erythritol 4-phosphate + CTP + H(+) = 4-CDP-2-C-methyl-D-erythritol + diphosphate. It carries out the reaction 4-CDP-2-C-methyl-D-erythritol 2-phosphate = 2-C-methyl-D-erythritol 2,4-cyclic diphosphate + CMP. The protein operates within isoprenoid biosynthesis; isopentenyl diphosphate biosynthesis via DXP pathway; isopentenyl diphosphate from 1-deoxy-D-xylulose 5-phosphate: step 2/6. Its pathway is isoprenoid biosynthesis; isopentenyl diphosphate biosynthesis via DXP pathway; isopentenyl diphosphate from 1-deoxy-D-xylulose 5-phosphate: step 4/6. Its function is as follows. Bifunctional enzyme that catalyzes the formation of 4-diphosphocytidyl-2-C-methyl-D-erythritol from CTP and 2-C-methyl-D-erythritol 4-phosphate (MEP) (IspD), and catalyzes the conversion of 4-diphosphocytidyl-2-C-methyl-D-erythritol 2-phosphate (CDP-ME2P) to 2-C-methyl-D-erythritol 2,4-cyclodiphosphate (ME-CPP) with a corresponding release of cytidine 5-monophosphate (CMP) (IspF). The polypeptide is Bifunctional enzyme IspD/IspF (Helicobacter pylori (strain HPAG1)).